The primary structure comprises 160 residues: Cytochrome b6-f complex subunit 4 (160 aa).

The next 3 helical transmembrane spans lie at 36-56 (LLYI…GLAV), 95-115 (LLGV…PFLE), and 131-151 (TVFL…TLPI).

The protein belongs to the cytochrome b family. PetD subfamily. In terms of assembly, the 4 large subunits of the cytochrome b6-f complex are cytochrome b6, subunit IV (17 kDa polypeptide, petD), cytochrome f and the Rieske protein, while the 4 small subunits are petG, petL, petM and petN. The complex functions as a dimer.

The protein resides in the plastid. The protein localises to the chloroplast thylakoid membrane. Functionally, component of the cytochrome b6-f complex, which mediates electron transfer between photosystem II (PSII) and photosystem I (PSI), cyclic electron flow around PSI, and state transitions. The polypeptide is Cytochrome b6-f complex subunit 4 (Gossypium barbadense (Sea Island cotton)).